The chain runs to 491 residues: Glutamyl-tRNA(Gln) amidotransferase subunit A (491 aa).

Residues lysine 79 and serine 154 each act as charge relay system in the active site. Catalysis depends on serine 178, which acts as the Acyl-ester intermediate.

This sequence belongs to the amidase family. GatA subfamily. Heterotrimer of A, B and C subunits.

The catalysed reaction is L-glutamyl-tRNA(Gln) + L-glutamine + ATP + H2O = L-glutaminyl-tRNA(Gln) + L-glutamate + ADP + phosphate + H(+). Functionally, allows the formation of correctly charged Gln-tRNA(Gln) through the transamidation of misacylated Glu-tRNA(Gln) in organisms which lack glutaminyl-tRNA synthetase. The reaction takes place in the presence of glutamine and ATP through an activated gamma-phospho-Glu-tRNA(Gln). This is Glutamyl-tRNA(Gln) amidotransferase subunit A from Alkaliphilus metalliredigens (strain QYMF).